The sequence spans 177 residues: PLAC8-like protein 1 (177 aa).

This sequence belongs to the cornifelin family.

In Mus musculus (Mouse), this protein is PLAC8-like protein 1 (Plac8l1).